We begin with the raw amino-acid sequence, 2696 residues long: Protein ILITYHIA (2696 aa).

The span at M1–A18 shows a compositional bias: polar residues. Positions M1–P26 are disordered. 9 HEAT repeats span residues D162–F204, S253–L290, K303–N340, E364–S400, K401–N438, S487–V525, A526–T562, S564–A601, and V642–C677. A disordered region spans residues K901–K941. Positions G923–K941 are enriched in basic and acidic residues. HEAT repeat units follow at residues H985 to Q1021, D1082 to A1118, H1188 to S1225, K1273 to K1311, S1315 to R1355, P1358 to E1395, A1397 to I1433, L1436 to K1474, P1478 to A1515, Y1516 to Q1553, P1564 to N1600, P1601 to D1638, P1640 to E1677, P1683 to E1720, N1722 to T1759, Y1761 to A1797, K1801 to T1838, and S1840 to G1876. Phosphoserine is present on S1887. HEAT repeat units follow at residues D1908–K1945, E1949–E1986, V1988–R2024, S2029–L2066, Q2067–A2102, V2104–N2137, T2138–E2175, G2177–L2213, D2217–K2254, P2258–P2292, K2293–E2330, E2335–M2373, P2377–R2414, D2416–K2450, A2455–A2492, Q2494–S2530, S2536–A2573, K2580–S2617, and M2620–G2658.

This sequence belongs to the GCN1 family.

Functionally, involved in immunity against bacterial infection and in non-host resistance. Required for embryo development. Required for systemic acquired resistance, but functions in an salicylic acid-independent manner. Required for bacterium-triggered stomatal closure response. In Arabidopsis thaliana (Mouse-ear cress), this protein is Protein ILITYHIA.